Consider the following 762-residue polypeptide: Endonuclease MutS2 (762 aa).

An ATP-binding site is contributed by 329–336; it reads GPNTGGKT. The Smr domain occupies 682 to 757; that stretch reads LNLIGKDVET…GSGVTVVYLE (76 aa).

Belongs to the DNA mismatch repair MutS family. MutS2 subfamily. As to quaternary structure, homodimer. Binds to stalled ribosomes, contacting rRNA.

Endonuclease that is involved in the suppression of homologous recombination and thus may have a key role in the control of bacterial genetic diversity. Functionally, acts as a ribosome collision sensor, splitting the ribosome into its 2 subunits. Detects stalled/collided 70S ribosomes which it binds and splits by an ATP-hydrolysis driven conformational change. Acts upstream of the ribosome quality control system (RQC), a ribosome-associated complex that mediates the extraction of incompletely synthesized nascent chains from stalled ribosomes and their subsequent degradation. Probably generates substrates for RQC. The protein is Endonuclease MutS2 of Aquifex aeolicus (strain VF5).